Reading from the N-terminus, the 349-residue chain is Inositol-tetrakisphosphate 1-kinase 2 (349 aa).

1D-myo-inositol 1,3,4-trisphosphate contacts are provided by Lys-48 and Lys-90. ATP-binding residues include Arg-125 and Lys-175. Residues His-186 and Lys-218 each coordinate 1D-myo-inositol 1,3,4-trisphosphate. Residues 207 to 218 and Ser-233 contribute to the ATP site; that span reads QEFVNHGGILFK. 3 residues coordinate Mg(2+): Asp-298, Asp-313, and Asn-315. Asn-315 contacts 1D-myo-inositol 1,3,4-trisphosphate.

This sequence belongs to the ITPK1 family. Monomer. Requires Mg(2+) as cofactor.

The enzyme catalyses 1D-myo-inositol 3,4,5,6-tetrakisphosphate + ATP = 1D-myo-inositol 1,3,4,5,6-pentakisphosphate + ADP + H(+). It carries out the reaction 1D-myo-inositol 1,3,4-trisphosphate + ATP = 1D-myo-inositol 1,3,4,5-tetrakisphosphate + ADP + H(+). The catalysed reaction is 1D-myo-inositol 1,3,4-trisphosphate + ATP = 1D-myo-inositol 1,3,4,6-tetrakisphosphate + ADP + H(+). Functionally, kinase that can phosphorylate various inositol polyphosphate such as Ins(3,4,5,6)P4 or Ins(1,3,4)P3 and participates in phytic acid biosynthesis in developing seeds. Phytic acid is the primary storage form of phosphorus in cereal grains and other plant seeds. This chain is Inositol-tetrakisphosphate 1-kinase 2 (ITPK2), found in Oryza sativa subsp. indica (Rice).